Reading from the N-terminus, the 861-residue chain is Glucans biosynthesis glucosyltransferase H (861 aa).

Disordered stretches follow at residues 65-89 and 101-129; these read RLSA…SVGR and AGEP…SMVP. Basic and acidic residues-rich tracts occupy residues 67-76 and 105-114; these read SAREPAKGET and LLKRRPDGTV. Helical transmembrane passes span 181 to 201, 208 to 228, 532 to 552, 589 to 609, 616 to 636, and 698 to 718; these read FLLG…TKVL, LLEI…SAGF, VFLT…FLLL, LFSA…LLLV, GGLP…ALLA, and FVLW…LSVM.

The protein belongs to the glycosyltransferase 2 family. OpgH subfamily.

It localises to the cell inner membrane. It functions in the pathway glycan metabolism; osmoregulated periplasmic glucan (OPG) biosynthesis. Its function is as follows. Involved in the biosynthesis of osmoregulated periplasmic glucans (OPGs). The chain is Glucans biosynthesis glucosyltransferase H from Cupriavidus pinatubonensis (strain JMP 134 / LMG 1197) (Cupriavidus necator (strain JMP 134)).